Here is a 528-residue protein sequence, read N- to C-terminus: UDP-glucuronosyltransferase 2A2 (528 aa).

A signal peptide spans 1–21; that stretch reads MIKKVLQLLIFHLTLAEIVLS. Over 22 to 494 the chain is Extracellular; the sequence is GNVVVWPTDG…FQYHSLDVIG (473 aa). 2 N-linked (GlcNAc...) asparagine glycosylation sites follow: asparagine 48 and asparagine 314. The helical transmembrane segment at 495 to 515 threads the bilayer; that stretch reads FLLACVASAILLVAKCCLFIF. Over 516–528 the chain is Cytoplasmic; sequence QKVGKTGKKKKRD.

Belongs to the UDP-glycosyltransferase family.

It localises to the membrane. The catalysed reaction is glucuronate acceptor + UDP-alpha-D-glucuronate = acceptor beta-D-glucuronoside + UDP + H(+). It carries out the reaction 17alpha-estradiol + UDP-alpha-D-glucuronate = 17alpha-estradiol 3-O-(beta-D-glucuronate) + UDP + H(+). The enzyme catalyses 17beta-estradiol + UDP-alpha-D-glucuronate = 17beta-estradiol 3-O-(beta-D-glucuronate) + UDP + H(+). It catalyses the reaction chenodeoxycholate + UDP-alpha-D-glucuronate = chenodeoxycholoyl-24-O-(beta-D-glucuronate) + UDP. The catalysed reaction is lithocholate + UDP-alpha-D-glucuronate = lithocholoyl-24-O-(beta-D-glucuronate) + UDP. It carries out the reaction deoxycholate + UDP-alpha-D-glucuronate = deoxycholoyl-24-O-(beta-D-glucuronate) + UDP. The enzyme catalyses hyocholate + UDP-alpha-D-glucuronate = hyocholoyl-24-O-(beta-D-glucuronate) + UDP. It catalyses the reaction hyodeoxycholate + UDP-alpha-D-glucuronate = hyodeoxycholate 6-O-(beta-D-glucuronate) + UDP + H(+). Its function is as follows. UDP-glucuronosyltransferase (UGT) that catalyzes phase II biotransformation reactions in which lipophilic substrates are conjugated with glucuronic acid to increase the metabolite's water solubility, thereby facilitating excretion into either the urine or bile. Essential for the elimination and detoxification of drugs, xenobiotics and endogenous compounds. Catalyzes the glucuronidation of endogenous estrogen hormone estradiol. Contributes to bile acid (BA) detoxification by catalyzing the glucuronidation of BA substrates, which are natural detergents for dietary lipids absorption. Potential role in detoxification of toxic waste compounds in the amniotic fluid before birth, and air-born chemical after birth. The chain is UDP-glucuronosyltransferase 2A2 from Mus musculus (Mouse).